Here is a 333-residue protein sequence, read N- to C-terminus: Small ribosomal subunit protein uS2 (333 aa).

Belongs to the universal ribosomal protein uS2 family.

This is Small ribosomal subunit protein uS2 from Azorhizobium caulinodans (strain ATCC 43989 / DSM 5975 / JCM 20966 / LMG 6465 / NBRC 14845 / NCIMB 13405 / ORS 571).